The following is a 1188-amino-acid chain: DNA-directed RNA polymerase subunit beta (1188 aa).

It belongs to the RNA polymerase beta chain family. The RNAP catalytic core consists of 2 alpha, 1 beta, 1 beta' and 1 omega subunit. When a sigma factor is associated with the core the holoenzyme is formed, which can initiate transcription.

The catalysed reaction is RNA(n) + a ribonucleoside 5'-triphosphate = RNA(n+1) + diphosphate. Functionally, DNA-dependent RNA polymerase catalyzes the transcription of DNA into RNA using the four ribonucleoside triphosphates as substrates. In Streptococcus pyogenes serotype M1, this protein is DNA-directed RNA polymerase subunit beta.